The following is a 95-amino-acid chain: Acylphosphatase (95 aa).

One can recognise an Acylphosphatase-like domain in the interval 8-95 (RVSARITGRV…DAFEGFRVRR (88 aa)). Catalysis depends on residues R23 and N41.

It belongs to the acylphosphatase family.

It catalyses the reaction an acyl phosphate + H2O = a carboxylate + phosphate + H(+). This chain is Acylphosphatase (acyP), found in Salinibacter ruber (strain DSM 13855 / M31).